We begin with the raw amino-acid sequence, 227 residues long: Cytochrome c oxidase subunit 2 (227 aa).

Residues 1 to 14 (MAYPFQLGLQDATS) lie on the Mitochondrial intermembrane side of the membrane. The helical transmembrane segment at 15-45 (PIMEELANFHDHTLMIVFLISSLVLYIISSM) threads the bilayer. The Mitochondrial matrix segment spans residues 46 to 59 (LTTKLTHTSTMDAQ). A helical membrane pass occupies residues 60–87 (EVETIWTILPAVILILIALPSLRILYMM). Over 88-227 (DEINNPALTV…HFENWSASMI (140 aa)) the chain is Mitochondrial intermembrane. Cu cation is bound by residues histidine 161, cysteine 196, glutamate 198, cysteine 200, histidine 204, and methionine 207. Glutamate 198 contacts Mg(2+).

This sequence belongs to the cytochrome c oxidase subunit 2 family. Component of the cytochrome c oxidase (complex IV, CIV), a multisubunit enzyme composed of 14 subunits. The complex is composed of a catalytic core of 3 subunits MT-CO1, MT-CO2 and MT-CO3, encoded in the mitochondrial DNA, and 11 supernumerary subunits COX4I, COX5A, COX5B, COX6A, COX6B, COX6C, COX7A, COX7B, COX7C, COX8 and NDUFA4, which are encoded in the nuclear genome. The complex exists as a monomer or a dimer and forms supercomplexes (SCs) in the inner mitochondrial membrane with NADH-ubiquinone oxidoreductase (complex I, CI) and ubiquinol-cytochrome c oxidoreductase (cytochrome b-c1 complex, complex III, CIII), resulting in different assemblies (supercomplex SCI(1)III(2)IV(1) and megacomplex MCI(2)III(2)IV(2)). Found in a complex with TMEM177, COA6, COX18, COX20, SCO1 and SCO2. Interacts with TMEM177 in a COX20-dependent manner. Interacts with COX20. Interacts with COX16. The cofactor is Cu cation.

Its subcellular location is the mitochondrion inner membrane. The catalysed reaction is 4 Fe(II)-[cytochrome c] + O2 + 8 H(+)(in) = 4 Fe(III)-[cytochrome c] + 2 H2O + 4 H(+)(out). Functionally, component of the cytochrome c oxidase, the last enzyme in the mitochondrial electron transport chain which drives oxidative phosphorylation. The respiratory chain contains 3 multisubunit complexes succinate dehydrogenase (complex II, CII), ubiquinol-cytochrome c oxidoreductase (cytochrome b-c1 complex, complex III, CIII) and cytochrome c oxidase (complex IV, CIV), that cooperate to transfer electrons derived from NADH and succinate to molecular oxygen, creating an electrochemical gradient over the inner membrane that drives transmembrane transport and the ATP synthase. Cytochrome c oxidase is the component of the respiratory chain that catalyzes the reduction of oxygen to water. Electrons originating from reduced cytochrome c in the intermembrane space (IMS) are transferred via the dinuclear copper A center (CU(A)) of subunit 2 and heme A of subunit 1 to the active site in subunit 1, a binuclear center (BNC) formed by heme A3 and copper B (CU(B)). The BNC reduces molecular oxygen to 2 water molecules using 4 electrons from cytochrome c in the IMS and 4 protons from the mitochondrial matrix. The polypeptide is Cytochrome c oxidase subunit 2 (MT-CO2) (Malacomys longipes (Big-eared swamp rat)).